A 158-amino-acid polypeptide reads, in one-letter code: Endoribonuclease YbeY (158 aa).

Residues His-122, His-126, and His-132 each coordinate Zn(2+).

Belongs to the endoribonuclease YbeY family. Requires Zn(2+) as cofactor.

Its subcellular location is the cytoplasm. In terms of biological role, single strand-specific metallo-endoribonuclease involved in late-stage 70S ribosome quality control and in maturation of the 3' terminus of the 16S rRNA. This is Endoribonuclease YbeY from Bacillus licheniformis (strain ATCC 14580 / DSM 13 / JCM 2505 / CCUG 7422 / NBRC 12200 / NCIMB 9375 / NCTC 10341 / NRRL NRS-1264 / Gibson 46).